The primary structure comprises 488 residues: Prostaglandin E2 receptor EP4 subtype (488 aa).

Over 1–19 (MSTPGVNSSASLSPDRLNS) the chain is Extracellular. Residue N7 is glycosylated (N-linked (GlcNAc...) asparagine). A helical membrane pass occupies residues 20–43 (PVTIPAVMFIFGVVGNLVAIVVLC). At 44-55 (KSRKEQKETTFY) the chain is on the cytoplasmic side. The chain crosses the membrane as a helical span at residues 56-79 (TLVCGLAVTDLLGTLLVSPVTIAT). The Extracellular segment spans residues 80-96 (YMKGQWPGGQPLCEYST). Cysteines 92 and 170 form a disulfide. Residues 97-115 (FILLFFSLSGLSIICAMSV) traverse the membrane as a helical segment. The Cytoplasmic segment spans residues 116–135 (ERYLAINHAYFYSHYVDKRL). Residues 136–160 (AGLTLFAVYASNVLFCALPNMGLGS) form a helical membrane-spanning segment. The Extracellular segment spans residues 161–184 (SRLQYPDTWCFIDWTTNVTAHAAY). A helical membrane pass occupies residues 185 to 211 (SYMYAGFSSFLILATVLCNVLVCGALL). Residues 212 to 267 (RMHRQFMRRTSLGTEQHHAAAAASVASRGHPAASPALPRLSDFRRRRSFRRIAGAE) lie on the Cytoplasmic side of the membrane. The helical transmembrane segment at 268-295 (IQMVILLIATSLVVLICSIPLVVRVFVN) threads the bilayer. At 296-312 (QLYQPSLEREVSKNPDL) the chain is on the extracellular side. Residues 313-332 (QAIRIASVNPILDPWIYILL) traverse the membrane as a helical segment. Residues 333–488 (RKTVLSKAIE…ETLNLSEKCI (156 aa)) lie on the Cytoplasmic side of the membrane. Positions 356 to 376 (RERSGQHCSDSQRTSSAMSGH) are disordered. A compositionally biased stretch (polar residues) spans 361–376 (QHCSDSQRTSSAMSGH). Phosphoserine is present on residues S374, S377, S379, and S382. A compositionally biased stretch (polar residues) spans 437-449 (SETSDSSQGQDSE). Residues 437–475 (SETSDSSQGQDSESVLLVDEAGGSGRAGPAPKGSSLQVT) are disordered.

The protein belongs to the G-protein coupled receptor 1 family. Interacts with FEM1A. In terms of processing, phosphorylation mediates agonist-mediated desensitization by promoting cytoplasmic retention. High in intestine and in peripheral blood mononuclear cells; low in lung, kidney, thymus, uterus, vasculature and brain. Not found in liver, heart, retina oe skeletal muscle.

The protein resides in the cell membrane. Its function is as follows. Receptor for prostaglandin E2 (PGE2). The activity of this receptor is mediated by G(s) proteins that stimulate adenylate cyclase. Has a relaxing effect on smooth muscle. May play an important role in regulating renal hemodynamics, intestinal epithelial transport, adrenal aldosterone secretion, and uterine function. This is Prostaglandin E2 receptor EP4 subtype (PTGER4) from Homo sapiens (Human).